Here is a 436-residue protein sequence, read N- to C-terminus: ATP-dependent RNA helicase RhlB (436 aa).

The Q motif signature appears at 9–37 (QKFADFPLHKEVHQALNEAGFEFCTPIQA). The region spanning 40–219 (LPILLEKKDI…YDHMNEPEKV (180 aa)) is the Helicase ATP-binding domain. 53 to 60 (AQTGTGKT) contributes to the ATP binding site. The DEAD box motif lies at 165–168 (DEAD). One can recognise a Helicase C-terminal domain in the interval 243-390 (KMPLLLSLLE…VTSYDSDALL (148 aa)). The segment at 392 to 436 (DIPPPVRIHRKPSTHTRNTRDRSSGRPQGGQRNGPRRHDKTRRHS) is disordered. The segment covering 425-436 (GPRRHDKTRRHS) has biased composition (basic residues).

The protein belongs to the DEAD box helicase family. RhlB subfamily. As to quaternary structure, component of the RNA degradosome, which is a multiprotein complex involved in RNA processing and mRNA degradation.

It is found in the cytoplasm. It catalyses the reaction ATP + H2O = ADP + phosphate + H(+). Functionally, DEAD-box RNA helicase involved in RNA degradation. Has RNA-dependent ATPase activity and unwinds double-stranded RNA. The polypeptide is ATP-dependent RNA helicase RhlB (Shewanella pealeana (strain ATCC 700345 / ANG-SQ1)).